The following is a 147-amino-acid chain: Large ribosomal subunit protein uL15 (147 aa).

Residues 1–57 form a disordered region; sequence MRLHDVKPQKGSKKRKKRVARGISAGQGASAGLGMRGQKSRSGSGTRPGFEGGQQPL. Basic residues predominate over residues 10 to 20; that stretch reads KGSKKRKKRVA.

It belongs to the universal ribosomal protein uL15 family. Part of the 50S ribosomal subunit.

Binds to the 23S rRNA. In Nostoc punctiforme (strain ATCC 29133 / PCC 73102), this protein is Large ribosomal subunit protein uL15.